The primary structure comprises 551 residues: Protein GPR107 (551 aa).

An N-terminal signal peptide occupies residues 1 to 33 (MAVRVPLGCTGSFCPRLLPLLALLELLVDPSLG). Over 34 to 262 (RVHHLALKDD…YLSAGEIPLP (229 aa)) the chain is Extracellular. N64 carries N-linked (GlcNAc...) asparagine glycosylation. Residues 127–183 (GVKVRSPPEAGKQLPEIVFSKDEKVPSRSQEPAVSSNPKDSKVQRTPDGSKAQRSTV) are disordered. A compositionally biased stretch (polar residues) spans 153 to 164 (SRSQEPAVSSNP). A glycan (N-linked (GlcNAc...) asparagine) is linked at N209. A helical transmembrane segment spans residues 263–283 (KLYVSMALLFFLSGTVWIHIL). At 284-292 (RKRRNDVFK) the chain is on the cytoplasmic side. Residues 293–313 (IHWLMAALPFTKSLSLVFHAI) traverse the membrane as a helical segment. The Extracellular portion of the chain corresponds to 314–336 (DYHYISSQGFPIEGWAVVYYITH). Residues 337-357 (LLKGALLFITIALIGTGWAFI) traverse the membrane as a helical segment. Residues 358–367 (KHILSDKDKK) lie on the Cytoplasmic side of the membrane. The chain crosses the membrane as a helical span at residues 368 to 388 (IFMIVIPLQVLANVAYIIIES). Over 389–401 (TEEGTTEYGLWKD) the chain is Extracellular. A helical membrane pass occupies residues 402 to 422 (SLFLVDLLCCGAILFPVVWSI). Residues 423-443 (RHLQEASATDGKAAINLAKLK) are Cytoplasmic-facing. Residues 444–466 (LFRHYYVLIVCYIYFTRIIAFLL) form a helical membrane-spanning segment. Topologically, residues 467–475 (KFAVPFQWK) are extracellular. The helical transmembrane segment at 476–495 (WLYQLLDETATLVFFVLTGY) threads the bilayer. Topologically, residues 496 to 551 (KFRPASDNPYLQLSQEEDDLEMESVVTTSGVMENMKKVKKVSNGAVEPQGSWEGTA) are cytoplasmic.

It belongs to the LU7TM family. Cleaved by FURIN to yield two fragments that remain associated via a disulfide bond. In terms of tissue distribution, widely expressed. Not detected in the duodenum, nor in the exocrine pancreas.

Its subcellular location is the cell membrane. It localises to the golgi apparatus. It is found in the trans-Golgi network membrane. Has been proposed to act as a receptor for neuronostatin, a peptide derived from the somatostatin/SST precursor. Involved in blood sugar regulation through the induction of glucagon in response to low glucose. The polypeptide is Protein GPR107 (Gpr107) (Rattus norvegicus (Rat)).